A 574-amino-acid polypeptide reads, in one-letter code: Membrane protein insertase YidC (574 aa).

The chain crosses the membrane as a helical span at residues 6–26 (VFLIFAWLMVAALLWMEWGKE). The tract at residues 65-85 (QAGAPGKVPATSTTTATPAAA) is disordered. The next 5 membrane-spanning stretches (helical) occupy residues 350–370 (VIDYSRFSIMAIIGQGLFWVL), 376–396 (FLHNWGWAIVGLVVLLRLVLY), 447–467 (GGCLPLLIQMPIFFALYWVLV), 491–511 (FILPALNIAIMWATQKLTPTP), and 525–545 (PLVFGAMMAFVPSGLVLYWVV).

Belongs to the OXA1/ALB3/YidC family. Type 1 subfamily. In terms of assembly, interacts with the Sec translocase complex via SecD. Specifically interacts with transmembrane segments of nascent integral membrane proteins during membrane integration.

Its subcellular location is the cell inner membrane. Functionally, required for the insertion and/or proper folding and/or complex formation of integral membrane proteins into the membrane. Involved in integration of membrane proteins that insert both dependently and independently of the Sec translocase complex, as well as at least some lipoproteins. Aids folding of multispanning membrane proteins. The polypeptide is Membrane protein insertase YidC (Xanthomonas oryzae pv. oryzae (strain PXO99A)).